The sequence spans 426 residues: N-formyl-4-amino-5-aminomethyl-2-methylpyrimidine deformylase (426 aa).

Residues 1–31 adopt a coiled-coil conformation; sequence MDQQIYSLQKKVEEHKEELIQLAKTLISYQT. Residue H89 participates in Zn(2+) binding. D91 is a catalytic residue. Position 122 (D122) interacts with Zn(2+). The Proton acceptor role is filled by E156. 3 residues coordinate Zn(2+): E157, D180, and H394.

This sequence belongs to the peptidase M20A family. The cofactor is Zn(2+). Requires Co(2+) as cofactor.

The catalysed reaction is N-formyl-4-amino-5-aminomethyl-2-methylpyrimidine + H2O = 4-amino-5-aminomethyl-2-methylpyrimidine + formate. It participates in cofactor biosynthesis; thiamine diphosphate biosynthesis. Its function is as follows. Catalyzes the deformylation of the formylaminopyrimidine N-formyl-4-amino-5-aminomethyl-2-methylpyrimidine (FAMP) to give the corresponding aminopyrimidine. The sequence is that of N-formyl-4-amino-5-aminomethyl-2-methylpyrimidine deformylase from Bacillus subtilis (strain 168).